A 343-amino-acid polypeptide reads, in one-letter code: Methionine import ATP-binding protein MetN 1 (343 aa).

Residues 2 to 241 enclose the ABC transporter domain; sequence IKLSNITKVF…PKTPLAQKFI (240 aa). Residue 38-45 participates in ATP binding; that stretch reads GASGAGKS.

The protein belongs to the ABC transporter superfamily. Methionine importer (TC 3.A.1.24) family. The complex is composed of two ATP-binding proteins (MetN), two transmembrane proteins (MetI) and a solute-binding protein (MetQ).

It localises to the cell inner membrane. The enzyme catalyses L-methionine(out) + ATP + H2O = L-methionine(in) + ADP + phosphate + H(+). It carries out the reaction D-methionine(out) + ATP + H2O = D-methionine(in) + ADP + phosphate + H(+). Functionally, part of the ABC transporter complex MetNIQ involved in methionine import. Responsible for energy coupling to the transport system. The sequence is that of Methionine import ATP-binding protein MetN 1 from Salmonella paratyphi A (strain ATCC 9150 / SARB42).